Here is a 368-residue protein sequence, read N- to C-terminus: Probable dual-specificity RNA methyltransferase RlmN (368 aa).

E100 functions as the Proton acceptor in the catalytic mechanism. The 239-residue stretch at Q106–D344 folds into the Radical SAM core domain. C113 and C349 are disulfide-bonded. [4Fe-4S] cluster is bound by residues C120, C124, and C127. S-adenosyl-L-methionine contacts are provided by residues G172–E173, S204, S227–H229, and N305. Catalysis depends on C349, which acts as the S-methylcysteine intermediate.

Belongs to the radical SAM superfamily. RlmN family. It depends on [4Fe-4S] cluster as a cofactor.

The protein resides in the cytoplasm. The catalysed reaction is adenosine(2503) in 23S rRNA + 2 reduced [2Fe-2S]-[ferredoxin] + 2 S-adenosyl-L-methionine = 2-methyladenosine(2503) in 23S rRNA + 5'-deoxyadenosine + L-methionine + 2 oxidized [2Fe-2S]-[ferredoxin] + S-adenosyl-L-homocysteine. The enzyme catalyses adenosine(37) in tRNA + 2 reduced [2Fe-2S]-[ferredoxin] + 2 S-adenosyl-L-methionine = 2-methyladenosine(37) in tRNA + 5'-deoxyadenosine + L-methionine + 2 oxidized [2Fe-2S]-[ferredoxin] + S-adenosyl-L-homocysteine. Functionally, specifically methylates position 2 of adenine 2503 in 23S rRNA and position 2 of adenine 37 in tRNAs. This chain is Probable dual-specificity RNA methyltransferase RlmN, found in Streptococcus agalactiae serotype III (strain NEM316).